Consider the following 336-residue polypeptide: Isopentenyl-diphosphate delta-isomerase (336 aa).

5 to 6 (RK) contacts substrate. FMN-binding positions include 60-62 (AMT), Ser90, and Asn117. Gln147 contacts substrate. A Mg(2+)-binding site is contributed by Glu148. FMN is bound by residues Lys179, Ser204, Thr209, 253–255 (GVR), and 274–275 (SR).

Belongs to the IPP isomerase type 2 family. Homooctamer. Dimer of tetramers. FMN serves as cofactor. NADPH is required as a cofactor. Requires Mg(2+) as cofactor.

It is found in the cytoplasm. It catalyses the reaction isopentenyl diphosphate = dimethylallyl diphosphate. In terms of biological role, involved in the biosynthesis of isoprenoids. Catalyzes the 1,3-allylic rearrangement of the homoallylic substrate isopentenyl (IPP) to its allylic isomer, dimethylallyl diphosphate (DMAPP). This is Isopentenyl-diphosphate delta-isomerase from Streptococcus pneumoniae (strain 70585).